A 96-amino-acid chain; its full sequence is Small ribosomal subunit protein uS19 (96 aa).

Residues 1–30 (MARSIKKGPFADKHLTKKVEDANKGNKKSV) form a disordered region. Positions 9-24 (PFADKHLTKKVEDANK) are enriched in basic and acidic residues.

It belongs to the universal ribosomal protein uS19 family.

In terms of biological role, protein S19 forms a complex with S13 that binds strongly to the 16S ribosomal RNA. This chain is Small ribosomal subunit protein uS19, found in Anaeromyxobacter sp. (strain Fw109-5).